The sequence spans 142 residues: Multiprotein-bridging factor 1b (142 aa).

The tract at residues 49 to 75 (NAGSNKAASSGTSLNTKKLDDDTENLS) is disordered. Over residues 50 to 64 (AGSNKAASSGTSLNT) the composition is skewed to polar residues. A compositionally biased stretch (basic and acidic residues) spans 65–75 (KKLDDDTENLS). The HTH cro/C1-type domain maps to 87–141 (IMQARGEKKLTQSQLAHLINEKPQVIQEYESGKAIPNQQILSKLERALGAKLRGK). A DNA-binding region (H-T-H motif) is located at residues 98-117 (QSQLAHLINEKPQVIQEYES).

The protein belongs to the MBF1 family. As to expression, expressed in leaves, roots, stems, petioles and shoots. Higher expression in flowers and siliques. Detected in leaf veins through development.

It is found in the nucleus. The protein localises to the nucleolus. In terms of biological role, transcriptional coactivator that stimulates transcriptional activity by bridging regulatory proteins and TBP, thereby recruiting TBP to promoters occupied by DNA-binding regulators. This is Multiprotein-bridging factor 1b (MBF1B) from Arabidopsis thaliana (Mouse-ear cress).